Consider the following 235-residue polypeptide: NAD(P)H-hydrate epimerase (235 aa).

The YjeF N-terminal domain maps to 12-218 (AIVMDQLLMG…EFLKETNLTI (207 aa)). A (6S)-NADPHX-binding site is contributed by 62-66 (NNGGD). Positions 63 and 127 each coordinate K(+). (6S)-NADPHX contacts are provided by residues 131 to 137 (GYSFKGD) and Asp161. Ser164 contacts K(+).

Belongs to the NnrE/AIBP family. K(+) serves as cofactor.

The catalysed reaction is (6R)-NADHX = (6S)-NADHX. It carries out the reaction (6R)-NADPHX = (6S)-NADPHX. In terms of biological role, catalyzes the epimerization of the S- and R-forms of NAD(P)HX, a damaged form of NAD(P)H that is a result of enzymatic or heat-dependent hydration. This is a prerequisite for the S-specific NAD(P)H-hydrate dehydratase to allow the repair of both epimers of NAD(P)HX. The chain is NAD(P)H-hydrate epimerase from Dictyostelium discoideum (Social amoeba).